Reading from the N-terminus, the 871-residue chain is Alanine--tRNA ligase (871 aa).

The Zn(2+) site is built by His590, His594, Cys694, and His698.

Belongs to the class-II aminoacyl-tRNA synthetase family. Zn(2+) is required as a cofactor.

The protein localises to the cytoplasm. The catalysed reaction is tRNA(Ala) + L-alanine + ATP = L-alanyl-tRNA(Ala) + AMP + diphosphate. Catalyzes the attachment of alanine to tRNA(Ala) in a two-step reaction: alanine is first activated by ATP to form Ala-AMP and then transferred to the acceptor end of tRNA(Ala). Also edits incorrectly charged Ser-tRNA(Ala) and Gly-tRNA(Ala) via its editing domain. This Thermoplasma acidophilum (strain ATCC 25905 / DSM 1728 / JCM 9062 / NBRC 15155 / AMRC-C165) protein is Alanine--tRNA ligase.